We begin with the raw amino-acid sequence, 538 residues long: Chaperonin GroEL 1 (538 aa).

ATP is bound by residues 29-32, 86-90, glycine 413, and aspartate 494; these read TLGP and DGTTT.

Belongs to the chaperonin (HSP60) family. In terms of assembly, forms a cylinder of 14 subunits composed of two heptameric rings stacked back-to-back. Interacts with the co-chaperonin GroES.

The protein resides in the cytoplasm. It carries out the reaction ATP + H2O + a folded polypeptide = ADP + phosphate + an unfolded polypeptide.. Its function is as follows. Together with its co-chaperonin GroES, plays an essential role in assisting protein folding. The GroEL-GroES system forms a nano-cage that allows encapsulation of the non-native substrate proteins and provides a physical environment optimized to promote and accelerate protein folding. This chain is Chaperonin GroEL 1, found in Mycobacterium avium (strain 104).